A 176-amino-acid chain; its full sequence is Probable DNA-directed RNA polymerase subunit delta (176 aa).

In terms of domain architecture, HTH HARE-type spans 14-81; the sequence is CSMIEVVHSV…GENRWGLRSW (68 aa). The interval 90–176 is disordered; that stretch reads EILPQPKPKK…ETEEEEEEEL (87 aa). A compositionally biased stretch (acidic residues) spans 106 to 176; it reads DGFDDYIEED…ETEEEEEEEL (71 aa).

The protein belongs to the RpoE family. RNAP is composed of a core of 2 alpha, a beta and a beta' subunits. The core is associated with a delta subunit and one of several sigma factors.

Functionally, participates in both the initiation and recycling phases of transcription. In the presence of the delta subunit, RNAP displays an increased specificity of transcription, a decreased affinity for nucleic acids, and an increased efficiency of RNA synthesis because of enhanced recycling. The chain is Probable DNA-directed RNA polymerase subunit delta from Bacillus thuringiensis subsp. konkukian (strain 97-27).